Reading from the N-terminus, the 172-residue chain is MIDGDGYRLNVGIVICNNHGQVFWAKRYGQHSWQFPQGGIDDGESPEQAMFRELYEEVGLTKKDVKVIATSRHWLRYKLPKRLVRWDSQPVCIGQKQKWFLLRLECDESKINMQRGSSPEFDGWRWVSYWYPVRQVVSFKRDVYRRAMKEFASLAMPFKERKVKGKRNTHRG.

One can recognise a Nudix hydrolase domain in the interval 6-149 (GYRLNVGIVI…KRDVYRRAMK (144 aa)). The Nudix box signature appears at 38-59 (GGIDDGESPEQAMFRELYEEVG).

The protein belongs to the Nudix hydrolase family. RppH subfamily. Requires a divalent metal cation as cofactor.

In terms of biological role, accelerates the degradation of transcripts by removing pyrophosphate from the 5'-end of triphosphorylated RNA, leading to a more labile monophosphorylated state that can stimulate subsequent ribonuclease cleavage. This Vibrio cholerae serotype O1 (strain ATCC 39315 / El Tor Inaba N16961) protein is RNA pyrophosphohydrolase.